Consider the following 97-residue polypeptide: MKIKHMPAKKSRLSKAQRDFLDTYFEVNPHPNTQERAYIASQSLVSEEKIRNWFQNRRTRERGDCKIASHRSAFSVNTFEENTSSVHPTSNDLYIRR.

Residues 6 to 65 (MPAKKSRLSKAQRDFLDTYFEVNPHPNTQERAYIASQSLVSEEKIRNWFQNRRTRERGDC) constitute a DNA-binding region (homeobox).

Its subcellular location is the nucleus. This Encephalitozoon cuniculi (strain GB-M1) (Microsporidian parasite) protein is Homeobox protein HD-9 (HD-9).